The primary structure comprises 259 residues: MGLLSNRIDRSSLKPGDHIYSWRTAYIYAHHGIYVGDDRVIHFTRRGQEVGTGTVLDLILVSSGPSRNHTHCPTCVPPNEGHGVVSSCLNCFLAGGVLYRFEYSVNAAHFLVKARGGTCTLAVADPNEIVVHRAKHLLQNGFGCYDVFKNNCEDFAIYCKTALLVLEGRTMGQSGQAVSIIGGPIAAVLSTPMRLLTTNVYGMAATAIGVYCASRYATDIGMRADVAKVEAEDLTRRLSSGLFQVLDPPLAAIALPSTS.

The 149-residue stretch at 20 to 168 (YSWRTAYIYA…CKTALLVLEG (149 aa)) folds into the LRAT domain. Catalysis depends on residues H30 and H42. The Acyl-thioester intermediate role is filled by C152.

In terms of tissue distribution, highly expressed in inflorescences, siliques and stems, and, to a lower extent, in roots and leaves.

Its subcellular location is the cytoplasm. Its function is as follows. Confers tolerance to lead ions (Pb) stress mediated by Pb(NO(3))(2) probably by promoting Pb accumulation leading to subsequent glutathione-dependent phytochelatin (PC) synthesis and related gene expression, including PDR12/ABCG40, GSH1, GSH2, GR1, GR2, PCS1 and PCS2. This is Protein LEAD-SENSITIVE 1 from Arabidopsis thaliana (Mouse-ear cress).